Reading from the N-terminus, the 178-residue chain is Large ribosomal subunit protein uL10 (178 aa).

The protein belongs to the universal ribosomal protein uL10 family. In terms of assembly, part of the ribosomal stalk of the 50S ribosomal subunit. The N-terminus interacts with L11 and the large rRNA to form the base of the stalk. The C-terminus forms an elongated spine to which L12 dimers bind in a sequential fashion forming a multimeric L10(L12)X complex.

Forms part of the ribosomal stalk, playing a central role in the interaction of the ribosome with GTP-bound translation factors. The protein is Large ribosomal subunit protein uL10 of Petrotoga mobilis (strain DSM 10674 / SJ95).